The primary structure comprises 116 residues: Ribosome-binding factor A (116 aa).

It belongs to the RbfA family. As to quaternary structure, monomer. Binds 30S ribosomal subunits, but not 50S ribosomal subunits or 70S ribosomes.

The protein localises to the cytoplasm. One of several proteins that assist in the late maturation steps of the functional core of the 30S ribosomal subunit. Associates with free 30S ribosomal subunits (but not with 30S subunits that are part of 70S ribosomes or polysomes). Required for efficient processing of 16S rRNA. May interact with the 5'-terminal helix region of 16S rRNA. This Streptococcus pneumoniae (strain Hungary19A-6) protein is Ribosome-binding factor A.